Consider the following 500-residue polypeptide: Vitamin D(3) 25-hydroxylase (500 aa).

Cysteine 446 is a binding site for heme.

This sequence belongs to the cytochrome P450 family. Requires heme as cofactor. In terms of tissue distribution, found in liver and kidney.

The protein resides in the endoplasmic reticulum membrane. Its subcellular location is the microsome membrane. It carries out the reaction calciol + reduced [NADPH--hemoprotein reductase] + O2 = calcidiol + oxidized [NADPH--hemoprotein reductase] + H2O + H(+). The catalysed reaction is alfacalcidol + reduced [NADPH--hemoprotein reductase] + O2 = calcitriol + oxidized [NADPH--hemoprotein reductase] + H2O + H(+). It catalyses the reaction dodecanoate + reduced [NADPH--hemoprotein reductase] + O2 = 12-hydroxydodecanoate + oxidized [NADPH--hemoprotein reductase] + H2O + H(+). The enzyme catalyses dodecanoate + reduced [NADPH--hemoprotein reductase] + O2 = 11-hydroxydodecanoate + oxidized [NADPH--hemoprotein reductase] + H2O + H(+). It carries out the reaction 5beta-cholestane-3alpha,7alpha-diol + reduced [NADPH--hemoprotein reductase] + O2 = 5beta-cholestane-3alpha,7alpha,25-triol + oxidized [NADPH--hemoprotein reductase] + H2O + H(+). The catalysed reaction is 5beta-cholestane-3alpha,7alpha,12alpha-triol + reduced [NADPH--hemoprotein reductase] + O2 = 5beta-cholestane-3alpha,7alpha,12alpha,25-tetrol + oxidized [NADPH--hemoprotein reductase] + H2O + H(+). In terms of biological role, catalyzes the 25-hydroxylation of vitamin D(3) (calciol), 1alpha-hydroxyvitamin D(3) (alphacalcidiol) and some C27 steroids. In addition the enzyme catalyzes the hydroxylation of positions 11 and 12 of dodecanoate. The polypeptide is Vitamin D(3) 25-hydroxylase (CYP2D25) (Sus scrofa (Pig)).